The sequence spans 641 residues: MLEQIRGPADLQHLSTHQLRELAAEIREFLIHKVAATGGHLGPNLGVVELTLALHRVFDSPHDPIIFDTGHQAYVHKMLTGRAHEFESLRKKGGLSGYPSRSESEHDWVESSHASAALSYADGLAKAFELSGHRNRHVVAVVGDGALTGGMCWEALNNIAASGRPVIIVVNDNGRSYAPTIGGVADHLATLRLQPAYEQALQRGRDALRALPLVGKFAYRVMHSVKAGIKDSLSPQLLFTDLGLKYVGPVDGHDERAVEAALRHARGFGRPVIVHVVTRKGMGYAPAEDDEADQMHSCGVIDPITGQATKVAGPGWTATFSDALIGYARKRRDIVAITAAMPGPTGLTPFGQQFPDRLFDVGIAEQHAMTSAAGLAMGGMHPVVAIYSTFLNRAFDQIMMDVALHRLPVTMVLDRAGITGSDGASHNGMWDLSILGVVPGMRVAAPRDAARLREELGEALDVDDGPTALRFPKGDVGEDIPAIERRGSGLSGVDVLALPASGCNHDVLLIGVGAFAPMALAVARRLADQGIGVTVVDPRWVLPVSDSILELAARHKLVVTCEDNGVNGGVGSAVSAALRRAELDVPCRDVGLPQRFYEHASRGELLADLALTDQDIARRITGWVAALGSGVAEAEIREHLD.

Residues histidine 71 and 112-114 (SHA) contribute to the thiamine diphosphate site. Aspartate 144 serves as a coordination point for Mg(2+). Residues 145-146 (GA), asparagine 173, tyrosine 284, and glutamate 365 each bind thiamine diphosphate. A Mg(2+)-binding site is contributed by asparagine 173.

It belongs to the transketolase family. DXPS subfamily. In terms of assembly, homodimer. Requires Mg(2+) as cofactor. Thiamine diphosphate is required as a cofactor.

It catalyses the reaction D-glyceraldehyde 3-phosphate + pyruvate + H(+) = 1-deoxy-D-xylulose 5-phosphate + CO2. It participates in metabolic intermediate biosynthesis; 1-deoxy-D-xylulose 5-phosphate biosynthesis; 1-deoxy-D-xylulose 5-phosphate from D-glyceraldehyde 3-phosphate and pyruvate: step 1/1. Its function is as follows. Catalyzes the acyloin condensation reaction between C atoms 2 and 3 of pyruvate and glyceraldehyde 3-phosphate to yield 1-deoxy-D-xylulose-5-phosphate (DXP). The sequence is that of 1-deoxy-D-xylulose-5-phosphate synthase from Mycobacterium avium (strain 104).